Reading from the N-terminus, the 153-residue chain is ATP synthase subunit b' (153 aa).

A helical membrane pass occupies residues T20–F40.

Belongs to the ATPase B chain family. F-type ATPases have 2 components, F(1) - the catalytic core - and F(0) - the membrane proton channel. F(1) has five subunits: alpha(3), beta(3), gamma(1), delta(1), epsilon(1). F(0) has four main subunits: a(1), b(1), b'(1) and c(10-14). The alpha and beta chains form an alternating ring which encloses part of the gamma chain. F(1) is attached to F(0) by a central stalk formed by the gamma and epsilon chains, while a peripheral stalk is formed by the delta, b and b' chains.

It is found in the cellular thylakoid membrane. Its function is as follows. F(1)F(0) ATP synthase produces ATP from ADP in the presence of a proton or sodium gradient. F-type ATPases consist of two structural domains, F(1) containing the extramembraneous catalytic core and F(0) containing the membrane proton channel, linked together by a central stalk and a peripheral stalk. During catalysis, ATP synthesis in the catalytic domain of F(1) is coupled via a rotary mechanism of the central stalk subunits to proton translocation. Component of the F(0) channel, it forms part of the peripheral stalk, linking F(1) to F(0). The b'-subunit is a diverged and duplicated form of b found in plants and photosynthetic bacteria. The protein is ATP synthase subunit b' of Prochlorococcus marinus (strain SARG / CCMP1375 / SS120).